A 127-amino-acid chain; its full sequence is Aspartate 1-decarboxylase (127 aa).

The active-site Schiff-base intermediate with substrate; via pyruvic acid is Ser-25. Pyruvic acid (Ser) is present on Ser-25. Residue Thr-57 participates in substrate binding. Tyr-58 (proton donor) is an active-site residue. 73-75 is a substrate binding site; sequence GAA.

The protein belongs to the PanD family. As to quaternary structure, heterooctamer of four alpha and four beta subunits. Requires pyruvate as cofactor. Is synthesized initially as an inactive proenzyme, which is activated by self-cleavage at a specific serine bond to produce a beta-subunit with a hydroxyl group at its C-terminus and an alpha-subunit with a pyruvoyl group at its N-terminus.

It localises to the cytoplasm. The enzyme catalyses L-aspartate + H(+) = beta-alanine + CO2. Its pathway is cofactor biosynthesis; (R)-pantothenate biosynthesis; beta-alanine from L-aspartate: step 1/1. Its function is as follows. Catalyzes the pyruvoyl-dependent decarboxylation of aspartate to produce beta-alanine. In Clostridium botulinum (strain ATCC 19397 / Type A), this protein is Aspartate 1-decarboxylase.